Consider the following 412-residue polypeptide: Pentatricopeptide repeat-containing protein At3g60980, mitochondrial (412 aa).

The N-terminal 18 residues, 1 to 18, are a transit peptide targeting the mitochondrion; sequence MSLIGRLNLGRRFCTAVP. 9 PPR repeats span residues 69 to 104, 105 to 139, 143 to 178, 179 to 213, 230 to 264, 266 to 296, 305 to 339, 344 to 371, and 373 to 407; these read TTTI…NLRP, NSHC…GQVH, SDDS…TTYP, DHVA…FLIA, VAFL…NRLL, CAET…LLDK, DSDT…NDYL, IITR…DFGY, and DVNT…TLKE.

This sequence belongs to the PPR family. P subfamily.

The protein localises to the mitochondrion. The sequence is that of Pentatricopeptide repeat-containing protein At3g60980, mitochondrial from Arabidopsis thaliana (Mouse-ear cress).